Consider the following 172-residue polypeptide: 3-hydroxydecanoyl-[acyl-carrier-protein] dehydratase (172 aa).

Residue His-70 is part of the active site.

The protein belongs to the thioester dehydratase family. FabA subfamily. Homodimer.

The protein resides in the cytoplasm. It catalyses the reaction a (3R)-hydroxyacyl-[ACP] = a (2E)-enoyl-[ACP] + H2O. The enzyme catalyses (3R)-hydroxydecanoyl-[ACP] = (2E)-decenoyl-[ACP] + H2O. It carries out the reaction (2E)-decenoyl-[ACP] = (3Z)-decenoyl-[ACP]. It functions in the pathway lipid metabolism; fatty acid biosynthesis. In terms of biological role, necessary for the introduction of cis unsaturation into fatty acids. Catalyzes the dehydration of (3R)-3-hydroxydecanoyl-ACP to E-(2)-decenoyl-ACP and then its isomerization to Z-(3)-decenoyl-ACP. Can catalyze the dehydratase reaction for beta-hydroxyacyl-ACPs with saturated chain lengths up to 16:0, being most active on intermediate chain length. The protein is 3-hydroxydecanoyl-[acyl-carrier-protein] dehydratase of Xylella fastidiosa (strain M23).